Consider the following 141-residue polypeptide: Small ribosomal subunit protein uS12 (141 aa).

Position 89 is a 3-methylthioaspartic acid (Asp89). The tract at residues 104-141 (ASGAVGPSNTNKLNRNVSRSKYGVKRPKAGAKPASKAK) is disordered. Over residues 110–122 (PSNTNKLNRNVSR) the composition is skewed to polar residues. A compositionally biased stretch (basic residues) spans 125 to 141 (YGVKRPKAGAKPASKAK).

Belongs to the universal ribosomal protein uS12 family. In terms of assembly, part of the 30S ribosomal subunit. Contacts proteins S8 and S17. May interact with IF1 in the 30S initiation complex.

Its function is as follows. With S4 and S5 plays an important role in translational accuracy. Functionally, interacts with and stabilizes bases of the 16S rRNA that are involved in tRNA selection in the A site and with the mRNA backbone. Located at the interface of the 30S and 50S subunits, it traverses the body of the 30S subunit contacting proteins on the other side and probably holding the rRNA structure together. The combined cluster of proteins S8, S12 and S17 appears to hold together the shoulder and platform of the 30S subunit. The chain is Small ribosomal subunit protein uS12 from Methylacidiphilum infernorum (isolate V4) (Methylokorus infernorum (strain V4)).